Reading from the N-terminus, the 237-residue chain is Ribose-5-phosphate isomerase A (237 aa).

Residues 30-33 (SGST), 87-90 (DGAD), and 100-103 (KGGG) contribute to the substrate site. Glutamate 109 acts as the Proton acceptor in catalysis. Lysine 127 serves as a coordination point for substrate.

The protein belongs to the ribose 5-phosphate isomerase family. In terms of assembly, homodimer.

It catalyses the reaction aldehydo-D-ribose 5-phosphate = D-ribulose 5-phosphate. It participates in carbohydrate degradation; pentose phosphate pathway; D-ribose 5-phosphate from D-ribulose 5-phosphate (non-oxidative stage): step 1/1. Its function is as follows. Catalyzes the reversible conversion of ribose-5-phosphate to ribulose 5-phosphate. The chain is Ribose-5-phosphate isomerase A from Prochlorococcus marinus (strain MIT 9211).